We begin with the raw amino-acid sequence, 172 residues long: Ly6/PLAUR domain-containing protein 6B (172 aa).

Residues 1 to 25 form the signal peptide; that stretch reads MLLLCHILAVTILQILIISENWVFA. In terms of domain architecture, UPAR/Ly6 spans 46–137; it reads FKCFTCENAG…VELPTNHTNA (92 aa). The sufficient for inhibiting alpha-7 nAChR currents stretch occupies residues 46 to 140; the sequence is FKCFTCENAG…PTNHTNAVFA (95 aa). 6 disulfide bridges follow: C48/C76, C51/C60, C69/C95, C101/C120, C106/C117, and C121/C126. Residue S148 is the site of GPI-anchor amidated serine attachment. Positions 149-172 are cleaved as a propeptide — removed in mature form; it reads GSSVSSVPSPYLLVLAWLFMLPLL.

The protein resides in the cell membrane. Functionally, likely acts as a modulator of nicotinic acetylcholine receptors (nAChRs) activity. In vitro acts on nAChRs in a subtype- and stoichiometry-dependent manner. Modulates specifically alpha-3(3):beta-4(2) nAChRs by enhancing the sensitivity to ACh, decreasing ACh-induced maximal current response and increasing the rate of desensitization to ACh; has no effect on alpha-7 homomeric nAChRs; modulates alpha-3(2):alpha-5:beta-4(2) nAChRs in the context of CHRNA5/alpha-5 variant Asn-398 but not its wild-type sequence. However, according to another report in vitro it can weakly inhibits alpha-7 nAChRs. This Mus musculus (Mouse) protein is Ly6/PLAUR domain-containing protein 6B (Lypd6b).